Here is a 590-residue protein sequence, read N- to C-terminus: Glutamine--fructose-6-phosphate aminotransferase [isomerizing] (590 aa).

Cys2 functions as the Nucleophile; for GATase activity in the catalytic mechanism. In terms of domain architecture, Glutamine amidotransferase type-2 spans 2–221; that stretch reads CGIIGIVSSK…DGELGFITTS (220 aa). SIS domains are found at residues 286–422 and 445–580; these read IIAE…DNTN and IGEE…PDKP. The For Fru-6P isomerization activity role is filled by Lys585.

Homodimer.

It localises to the cytoplasm. It carries out the reaction D-fructose 6-phosphate + L-glutamine = D-glucosamine 6-phosphate + L-glutamate. Catalyzes the first step in hexosamine metabolism, converting fructose-6P into glucosamine-6P using glutamine as a nitrogen source. The protein is Glutamine--fructose-6-phosphate aminotransferase [isomerizing] of Sulfolobus acidocaldarius (strain ATCC 33909 / DSM 639 / JCM 8929 / NBRC 15157 / NCIMB 11770).